The following is a 282-amino-acid chain: MSPVAIVACVCLAVTLTRISPSEAIFPTPELQNVFLGRCKDYEITRYLTILPRVKSDCRALWTNFFKAFSFKAPCNLDLGSYKDFFQRAQQTLPKNKVMFWSGVYDEAHDFADDGRKYITLEDTLPGYMLNSLVWCGQRDKPGFNQKVCPDFKDCPVQARESFWGTASSSYAHSAEGDVTYMVDGSNPKVPAYRPDSFFGKYELPNLTNKVTKVKVIVLHQLGQKIIERCGAGSLLDLEMVVKAKKFGFDCVENPKSVLFLLCADNPNARECQLAKRYYRIA.

The N-terminal stretch at 1 to 24 (MSPVAIVACVCLAVTLTRISPSEA) is a signal peptide. 5 disulfide bridges follow: Cys-39/Cys-58, Cys-75/Cys-155, Cys-136/Cys-149, Cys-230/Cys-251, and Cys-263/Cys-272.

Belongs to the ADP-ribosyl cyclase family. As to expression, ovotestis.

The protein resides in the cytoplasmic vesicle. It carries out the reaction NAD(+) = cyclic ADP-beta-D-ribose + nicotinamide + H(+). It catalyses the reaction NAD(+) + H2O = ADP-D-ribose + nicotinamide + H(+). The catalysed reaction is nicotinate + NADP(+) = nicotinate-adenine dinucleotide phosphate + nicotinamide. Its activity is regulated as follows. Activity is presumably regulated by its sequestration in vesicles before egg fertilization. After fertilization and upon NADase release, it could then be regulated via its potential phosphorylation sites. Its function is as follows. Synthesizes cyclic ADP-ribose (cADPR), a second messenger for calcium mobilization from endoplasmic reticulum. Might make the Ca(2+) mobilizer nicotinate-adenine dinucleotide phosphate. Does not have cADPR hydrolase activity. The polypeptide is ADP-ribosyl cyclase/cyclic ADP-ribose hydrolase (Aplysia kurodai (Kuroda's sea hare)).